Consider the following 494-residue polypeptide: 3-octaprenyl-4-hydroxybenzoate carboxy-lyase (494 aa).

Asparagine 172 lines the Mn(2+) pocket. Prenylated FMN is bound by residues 175–177 (IYR), 189–191 (RWL), and 194–195 (RG). Glutamate 238 is a binding site for Mn(2+). The active-site Proton donor is the aspartate 287.

This sequence belongs to the UbiD family. As to quaternary structure, homohexamer. Prenylated FMN is required as a cofactor. Mn(2+) serves as cofactor.

The protein resides in the cell membrane. The enzyme catalyses a 4-hydroxy-3-(all-trans-polyprenyl)benzoate + H(+) = a 2-(all-trans-polyprenyl)phenol + CO2. It functions in the pathway cofactor biosynthesis; ubiquinone biosynthesis. Catalyzes the decarboxylation of 3-octaprenyl-4-hydroxy benzoate to 2-octaprenylphenol, an intermediate step in ubiquinone biosynthesis. This Erwinia tasmaniensis (strain DSM 17950 / CFBP 7177 / CIP 109463 / NCPPB 4357 / Et1/99) protein is 3-octaprenyl-4-hydroxybenzoate carboxy-lyase.